The primary structure comprises 296 residues: Phosphatidylglycerol--prolipoprotein diacylglyceryl transferase (296 aa).

7 consecutive transmembrane segments (helical) span residues 17-37 (LAVR…IVVG), 59-79 (MMFY…VLFY), 97-117 (GGMS…LFAW), 129-149 (FVAP…FING), 204-224 (SQLY…FLFA), 230-250 (MGAI…TVEF), and 257-277 (FLGL…PMIL). Position 142 (Arg-142) interacts with a 1,2-diacyl-sn-glycero-3-phospho-(1'-sn-glycerol).

It belongs to the Lgt family.

The protein resides in the cell inner membrane. The enzyme catalyses L-cysteinyl-[prolipoprotein] + a 1,2-diacyl-sn-glycero-3-phospho-(1'-sn-glycerol) = an S-1,2-diacyl-sn-glyceryl-L-cysteinyl-[prolipoprotein] + sn-glycerol 1-phosphate + H(+). The protein operates within protein modification; lipoprotein biosynthesis (diacylglyceryl transfer). Catalyzes the transfer of the diacylglyceryl group from phosphatidylglycerol to the sulfhydryl group of the N-terminal cysteine of a prolipoprotein, the first step in the formation of mature lipoproteins. This chain is Phosphatidylglycerol--prolipoprotein diacylglyceryl transferase, found in Burkholderia cenocepacia (strain HI2424).